A 233-amino-acid polypeptide reads, in one-letter code: Orotidine 5'-phosphate decarboxylase (233 aa).

Substrate is bound by residues D13, K35, D62 to T71, T122, R182, Q191, G211, and R212. The active-site Proton donor is K64.

This sequence belongs to the OMP decarboxylase family. Type 1 subfamily. Homodimer.

It carries out the reaction orotidine 5'-phosphate + H(+) = UMP + CO2. The protein operates within pyrimidine metabolism; UMP biosynthesis via de novo pathway; UMP from orotate: step 2/2. Catalyzes the decarboxylation of orotidine 5'-monophosphate (OMP) to uridine 5'-monophosphate (UMP). This is Orotidine 5'-phosphate decarboxylase from Pseudomonas fluorescens (strain ATCC BAA-477 / NRRL B-23932 / Pf-5).